The primary structure comprises 751 residues: Nucleoporin NUP37 (751 aa).

A WD 1 repeat occupies 21–65 (SLGRRIYDVKTYPVQSPQGATILIYGHENGATVVWRGGRRLKPPK). Residues 57-77 (GGRRLKPPKPQTNEKRNGTKP) are disordered. A compositionally biased stretch (basic and acidic residues) spans 68–77 (TNEKRNGTKP). WD repeat units lie at residues 162–209 (TNDV…LTGP), 237–271 (AQAAPITRVVVAAHSREASGTLRLWDVPLEAKPGT), 282–322 (YLPS…LPSD), and 351–390 (TSRKPIVAAEWIARGRAILTLLADGQWGIWDLDGASPTAA). The interval 419-443 (EGTSPLRNPTTQKASSSSSGEFVPM) is disordered. Residues 423 to 438 (PLRNPTTQKASSSSSG) are compositionally biased toward polar residues. WD repeat units lie at residues 455–492 (AFGGSPEKLAAVRGGITVAQLPSTLTSGAGDESAVLFL) and 494–534 (GADP…RMIR). The interval 671–692 (IPSTDAGDEETIPATSAPSSQQ) is disordered. Residues 683-692 (PATSAPSSQQ) show a composition bias toward polar residues. A coiled-coil region spans residues 716 to 750 (RDVEQELLDIMEIDRELEQLEQARERGRKRVFFEE).

In terms of assembly, the nuclear pore complex (NPC) constitutes the exclusive means of nucleocytoplasmic transport. NPCs allow the passive diffusion of ions and small molecules and the active, nuclear transport receptor-mediated bidirectional transport of macromolecules such as proteins, RNAs, ribonucleoparticles (RNPs), and ribosomal subunits across the nuclear envelope. The 55-60 MDa NPC is composed of at least 28 different subunits: AMO1, ELYS, GLE1, GLE2, MLP1, NDC1, NIC96, NSP1, NUP133, NUP145, NUP152, NUP159, NUP170, NUP188, NUP192, NUP37, NUP49, NUP53, NUP56, NUP57, NUP82, NUP84, NUP85, POM152, POM33, POM34, SEC13 and SEH1. Due to its 8-fold rotational symmetry, all subunits are present with 8 copies or multiples thereof.

Its subcellular location is the nucleus. It localises to the nuclear pore complex. This Chaetomium thermophilum (strain DSM 1495 / CBS 144.50 / IMI 039719) (Thermochaetoides thermophila) protein is Nucleoporin NUP37 (NUP37).